Here is a 729-residue protein sequence, read N- to C-terminus: Heterogeneous nuclear ribonucleoprotein M (729 aa).

The span at 1–13 (MAAGVEAAAEVAA) shows a compositional bias: low complexity. Residues 1 to 65 (MAAGVEAAAE…GGNRFEPYSN (65 aa)) are disordered. Position 2 is an N-acetylalanine (alanine 2). Lysine 17 participates in a covalent cross-link: Glycyl lysine isopeptide (Lys-Gly) (interchain with G-Cter in SUMO2). Serine 29 carries the post-translational modification Phosphoserine. Residues lysine 37, lysine 68, and lysine 82 each participate in a glycyl lysine isopeptide (Lys-Gly) (interchain with G-Cter in SUMO2) cross-link. A compositionally biased stretch (basic and acidic residues) spans 37 to 49 (KGEERPTQNEKRK). RRM domains lie at 70 to 148 (YRAF…EDPD) and 203 to 280 (STVF…MDER). Serine 85 carries the phosphoserine modification. Residues lysine 87 and lysine 126 each participate in a glycyl lysine isopeptide (Lys-Gly) (interchain with G-Cter in SUMO2) cross-link. Position 133 is an N6-acetyllysine; alternate (lysine 133). A Glycyl lysine isopeptide (Lys-Gly) (interchain with G-Cter in SUMO2); alternate cross-link involves residue lysine 133. Residues lysine 142 and lysine 144 each participate in a glycyl lysine isopeptide (Lys-Gly) (interchain with G-Cter in SUMO2) cross-link. Phosphoserine is present on serine 203. Lysine 220 participates in a covalent cross-link: Glycyl lysine isopeptide (Lys-Gly) (interchain with G-Cter in SUMO2). An N6-acetyllysine; alternate modification is found at lysine 276. Residue lysine 276 forms a Glycyl lysine isopeptide (Lys-Gly) (interchain with G-Cter in SUMO2); alternate linkage. Glycyl lysine isopeptide (Lys-Gly) (interchain with G-Cter in SUMO2) cross-links involve residues lysine 284 and lysine 344. Phosphoserine is present on residues serine 364 and serine 376. Residues lysine 380 and lysine 387 each participate in a glycyl lysine isopeptide (Lys-Gly) (interchain with G-Cter in SUMO2) cross-link. Serine 396 carries the phosphoserine modification. 4 tandem repeats follow at residues 399-404 (GIERMG), 406-411 (GIDRIS), 414-419 (GMERMG), and 425-430 (GMDRVG). Positions 399–607 (GIERMGPGID…ALGAGIERMG (209 aa)) are 27 X 6 AA repeats of [GEVSTPAN]-[ILMV]-[DE]-[RH]-[MLVI]-[GAV]. A Phosphoserine modification is found at serine 431. Repeat copies occupy residues 432–437 (EIERMG), 439–444 (VMDRMG), and 445–450 (SVERMG). At serine 451 the chain carries Phosphoserine. Tandem repeats lie at residues 452–457 (SIERMG), 460–465 (GLDHMA), 467–472 (SIERMG), and 474–479 (TMERIG). The residue at position 467 (serine 467) is a Phosphoserine. At serine 480 the chain carries Phosphoserine. 16 tandem repeats follow at residues 481–486 (GVERMG), 492–497 (GLERMA), 499–504 (PIDRVG), 506–511 (TIERMG), 513–518 (GVERMG), 520–525 (AIERMG), 527–532 (SMDRMV), 539–544 (SLERMG), 546–551 (VMDRMA), 553–558 (GLERMG), 561–566 (NLERMG), 567–571 (LERMG), 574–579 (SLERMG), 580–584 (LERMG), 587–592 (SLERMG), and 602–607 (GIERMG). Position 495 is an omega-N-methylarginine (arginine 495). Serine 527 carries the post-translational modification Phosphoserine. Residue serine 574 is modified to Phosphoserine. Position 587 is a phosphoserine (serine 587). 3 positions are modified to phosphoserine: serine 617, serine 632, and serine 636. Lysine 650 participates in a covalent cross-link: Glycyl lysine isopeptide (Lys-Gly) (interchain with G-Cter in SUMO2). One can recognise an RRM 3 domain in the interval 652-728 (CQIFVRNLPF…REIDVRIDRN (77 aa)). Position 664 is a phosphothreonine (threonine 664). Residue lysine 666 forms a Glycyl lysine isopeptide (Lys-Gly) (interchain with G-Cter in SUMO2) linkage. An N6-acetyllysine modification is found at lysine 671. Glycyl lysine isopeptide (Lys-Gly) (interchain with G-Cter in SUMO2) cross-links involve residues lysine 684 and lysine 691. Lysine 697 carries the N6-acetyllysine; alternate modification. Lysine 697 participates in a covalent cross-link: Glycyl lysine isopeptide (Lys-Gly) (interchain with G-Cter in SUMO2); alternate. A Glycyl lysine isopeptide (Lys-Gly) (interchain with G-Cter in SUMO1); alternate cross-link involves residue lysine 697. Phosphoserine is present on serine 700. A Glycyl lysine isopeptide (Lys-Gly) (interchain with G-Cter in SUMO2) cross-link involves residue lysine 715.

As to quaternary structure, identified in the spliceosome C complex. Interacts with PPIA/CYPA. In terms of processing, sumoylated.

The protein resides in the nucleus. Its function is as follows. Pre-mRNA binding protein in vivo, binds avidly to poly(G) and poly(U) RNA homopolymers in vitro. Involved in splicing. Acts as a receptor for carcinoembryonic antigen in Kupffer cells, may initiate a series of signaling events leading to tyrosine phosphorylation of proteins and induction of IL-1 alpha, IL-6, IL-10 and tumor necrosis factor alpha cytokines. This is Heterogeneous nuclear ribonucleoprotein M (Hnrnpm) from Mus musculus (Mouse).